The primary structure comprises 612 residues: Sulfite reductase [NADPH] hemoprotein beta-component (612 aa).

Residues 1-32 (MDDHKPIDTPDGPAVDTPGIGAHRYEAPPTDR) form a disordered region. Residues Cys-469, Cys-475, Cys-514, and Cys-518 each contribute to the [4Fe-4S] cluster site. Cys-518 provides a ligand contact to siroheme.

It belongs to the nitrite and sulfite reductase 4Fe-4S domain family. As to quaternary structure, alpha(8)-beta(8). The alpha component is a flavoprotein, the beta component is a hemoprotein. Siroheme is required as a cofactor. The cofactor is [4Fe-4S] cluster.

It carries out the reaction hydrogen sulfide + 3 NADP(+) + 3 H2O = sulfite + 3 NADPH + 4 H(+). Its pathway is sulfur metabolism; hydrogen sulfide biosynthesis; hydrogen sulfide from sulfite (NADPH route): step 1/1. In terms of biological role, component of the sulfite reductase complex that catalyzes the 6-electron reduction of sulfite to sulfide. This is one of several activities required for the biosynthesis of L-cysteine from sulfate. The sequence is that of Sulfite reductase [NADPH] hemoprotein beta-component from Methylorubrum populi (strain ATCC BAA-705 / NCIMB 13946 / BJ001) (Methylobacterium populi).